We begin with the raw amino-acid sequence, 1128 residues long: Nck-associated protein 1 (1128 aa).

A disordered region spans residues A640–M665. Residues K651–M665 are compositionally biased toward basic and acidic residues. The chain crosses the membrane as a helical span at residues I995 to M1015.

It belongs to the HEM-1/HEM-2 family.

It localises to the cell membrane. The protein localises to the cell projection. It is found in the lamellipodium membrane. Its function is as follows. Part of the WAVE complex that regulates lamellipodia formation. The WAVE complex regulates actin filament reorganization via its interaction with the Arp2/3 complex. Actin remodeling activity is regulated by RAC1. Plays a role in neural tube closure. The sequence is that of Nck-associated protein 1 (nckap1) from Xenopus laevis (African clawed frog).